Here is a 427-residue protein sequence, read N- to C-terminus: MSLMFLRRAGNIKGRNIRFALQRGSVGYSQQSSEACKNFLNTTQLRTMVQTAALHGPKPMDSSHIKVTNVKELKPLPEWKSLKFGENFTDHMLIMKWNREKGWSTPEIVPFGKLCFHPASSVFHYGFECFEGMKAFRDEKGVPRLFRPIKNAERMLSTGTRISLPSFDPAELAEIIRKFVAHENRWVPDQRGYSLYIRPTFIGTDEALGVHHCDNAMLYVIASPVGPYYSSGFKAVKLCCSEESVRAWPGGTGHYKLGGNYAPSVLPQKEAAKKGYAQILWLYGDEDYITEVGTMNCFTVWINKNGEKEIITAPLDGMILPGVTRDSILEICRERLAPKGWKITEGKYSMKEVAQASKEGRLLEVFGAGTAALVSPVKAINYKGTEYEIPMPEGQEAGPITSEISKWILDIQYGKEPNNPWSVPALP.

Residues 1–47 constitute a mitochondrion transit peptide; sequence MSLMFLRRAGNIKGRNIRFALQRGSVGYSQQSSEACKNFLNTTQLRT. N6-(pyridoxal phosphate)lysine is present on Lys256.

It belongs to the class-IV pyridoxal-phosphate-dependent aminotransferase family. Requires pyridoxal 5'-phosphate as cofactor.

The protein resides in the mitochondrion. It localises to the nucleus. The protein localises to the cytoplasm. It carries out the reaction L-leucine + 2-oxoglutarate = 4-methyl-2-oxopentanoate + L-glutamate. The catalysed reaction is L-isoleucine + 2-oxoglutarate = (S)-3-methyl-2-oxopentanoate + L-glutamate. The enzyme catalyses L-valine + 2-oxoglutarate = 3-methyl-2-oxobutanoate + L-glutamate. In terms of biological role, catalyzes the first reaction in the catabolism of the essential branched chain amino acids leucine, isoleucine, and valine. The polypeptide is Branched-chain-amino-acid aminotransferase, mitochondrial (eca39) (Schizosaccharomyces pombe (strain 972 / ATCC 24843) (Fission yeast)).